We begin with the raw amino-acid sequence, 1217 residues long: ATP-dependent helicase/nuclease subunit A (1217 aa).

The UvrD-like helicase ATP-binding domain maps to 10-475; that stretch reads VIWTDAQWQS…IDLSQNFRSR (466 aa). 31 to 38 serves as a coordination point for ATP; the sequence is AAAGSGKT. Residues 476-786 form the UvrD-like helicase C-terminal domain; sequence KEVLSTTNYI…RMMTIHSSKG (311 aa).

Belongs to the helicase family. AddA subfamily. In terms of assembly, heterodimer of AddA and AddB/RexB. Mg(2+) serves as cofactor.

The catalysed reaction is Couples ATP hydrolysis with the unwinding of duplex DNA by translocating in the 3'-5' direction.. It catalyses the reaction ATP + H2O = ADP + phosphate + H(+). In terms of biological role, the heterodimer acts as both an ATP-dependent DNA helicase and an ATP-dependent, dual-direction single-stranded exonuclease. Recognizes the chi site generating a DNA molecule suitable for the initiation of homologous recombination. The AddA nuclease domain is required for chi fragment generation; this subunit has the helicase and 3' -&gt; 5' nuclease activities. In Staphylococcus aureus (strain MW2), this protein is ATP-dependent helicase/nuclease subunit A.